The following is a 942-amino-acid chain: UvrABC system protein A (942 aa).

Residue 32 to 39 (GLSGSGKS) coordinates ATP. A C4-type zinc finger spans residues 251-278 (CPVCGFTVPELEPRLFSFNAPFGSCPTC). 2 consecutive ABC transporter domains span residues 308–589 (WNPI…KKSI) and 609–937 (GNGR…HYLK). An ATP-binding site is contributed by 641-648 (GVSGSGKS). A C4-type zinc finger spans residues 740–766 (CEACSGDGIIKIEMHFLPDVYVPCEVC).

It belongs to the ABC transporter superfamily. UvrA family. In terms of assembly, forms a heterotetramer with UvrB during the search for lesions.

Its subcellular location is the cytoplasm. In terms of biological role, the UvrABC repair system catalyzes the recognition and processing of DNA lesions. UvrA is an ATPase and a DNA-binding protein. A damage recognition complex composed of 2 UvrA and 2 UvrB subunits scans DNA for abnormalities. When the presence of a lesion has been verified by UvrB, the UvrA molecules dissociate. This Streptococcus pyogenes serotype M6 (strain ATCC BAA-946 / MGAS10394) protein is UvrABC system protein A.